A 424-amino-acid chain; its full sequence is Translation initiation factor 2 subunit gamma (424 aa).

Positions 23 to 220 (LPEVNIGLVG…AIEETIPTPE (198 aa)) constitute a tr-type G domain. Residues 32–39 (GHVDHGKT) form a G1 region. Mg(2+) contacts are provided by D35, T39, G60, and S62. 35–40 (DHGKTT) is a binding site for GTP. The G2 stretch occupies residues 60-64 (GISIK). A G3 region spans residues 107–110 (DSPG). GTP-binding positions include 163–166 (NKID) and 198–200 (SAQ). A G4 region spans residues 163–166 (NKID). The tract at residues 198–200 (SAQ) is G5.

This sequence belongs to the TRAFAC class translation factor GTPase superfamily. Classic translation factor GTPase family. EIF2G subfamily. Heterotrimer composed of an alpha, a beta and a gamma chain. Mg(2+) is required as a cofactor.

It catalyses the reaction GTP + H2O = GDP + phosphate + H(+). Its function is as follows. eIF-2 functions in the early steps of protein synthesis by forming a ternary complex with GTP and initiator tRNA. This is Translation initiation factor 2 subunit gamma from Archaeoglobus fulgidus (strain ATCC 49558 / DSM 4304 / JCM 9628 / NBRC 100126 / VC-16).